Here is a 209-residue protein sequence, read N- to C-terminus: SAGA-associated factor 11 homolog 1 (209 aa).

The tract at residues 1–36 (MSRTIVVKNPRTSGKDEDKAQIPSQDELPSGSSGAK) is disordered. Residues 120-141 (CCCPNCERMVAAVRFAPHLQTC) form an SGF11-type zinc finger. Residues 156-166 (LTVSSRSSSTS) show a composition bias toward low complexity. The interval 156-209 (LTVSSRSSSTSTGGGQANEKSTDDEDWSLDSRPGKSTKNSRNKGSKKNQKNKLK) is disordered. Positions 193–209 (KNSRNKGSKKNQKNKLK) are enriched in basic residues.

This sequence belongs to the SGF11 family. Component of some SAGA transcription coactivator-HAT complexes, at least composed of Ada2b, not/nonstop, Pcaf/Gcn5, Sgf11 and Spt3. Within the SAGA complex, Sgf11, e(y)2, and not/nonstop form an additional subcomplex of SAGA called the DUB module (deubiquitination module). Interacts directly with not/nonstop. Interacts with the AMEX complex component xmas-2. Interacts with Cbp80; important for promoter recruitment of Sgf11 that is not associated with the DUB module.

Its subcellular location is the nucleus. It is found in the nucleoplasm. It localises to the cytoplasm. In terms of biological role, component of the transcription regulatory histone acetylation (HAT) complex SAGA, a multiprotein complex that activates transcription by remodeling chromatin and mediating histone acetylation and deubiquitination. Within the SAGA complex, participates in a subcomplex that specifically deubiquitinates histone H2B. The SAGA complex is recruited to specific gene promoters by activators, where it is required for transcription. Required for nuclear receptor-mediated transactivation. Binds independently on SAGA to promoters in an RNA-dependent manner. Binds to mRNA and is essential for total mRNA export from the nucleus. Required to counteract heterochromatin silencing. Controls the development of neuronal connectivity in visual system by being required for accurate axon targeting in the optic lobe. Required for expression of ecdysone-induced genes such as br/broad. This chain is SAGA-associated factor 11 homolog 1, found in Drosophila willistoni (Fruit fly).